We begin with the raw amino-acid sequence, 447 residues long: Glyceraldehyde-3-phosphate dehydrogenase GAPB, chloroplastic (447 aa).

The N-terminal 80 residues, M1–A80, are a transit peptide targeting the chloroplast. NADP(+) is bound by residues R91–I92, D115, and R160. D-glyceraldehyde 3-phosphate contacts are provided by residues S234 to T236, T265, R280, T293 to G294, and R316. C235 serves as the catalytic Nucleophile. Position 399 (N399) interacts with NADP(+).

Belongs to the glyceraldehyde-3-phosphate dehydrogenase family. Tetramer of either four A chains (GAPDH 2) or two A and two B chains (GAPDH 1). As to expression, expressed in leaves and stems.

The protein resides in the plastid. The protein localises to the chloroplast membrane. It localises to the chloroplast stroma. It carries out the reaction D-glyceraldehyde 3-phosphate + phosphate + NADP(+) = (2R)-3-phospho-glyceroyl phosphate + NADPH + H(+). It participates in carbohydrate biosynthesis; Calvin cycle. Involved in the photosynthetic reductive pentose phosphate pathway (Calvin-Benson cycle). Catalyzes the reduction of 1,3-diphosphoglycerate by NADPH. In Arabidopsis thaliana (Mouse-ear cress), this protein is Glyceraldehyde-3-phosphate dehydrogenase GAPB, chloroplastic (GAPB).